The primary structure comprises 63 residues: Large ribosomal subunit protein uL29 (63 aa).

It belongs to the universal ribosomal protein uL29 family.

The protein is Large ribosomal subunit protein uL29 of Vibrio vulnificus (strain CMCP6).